A 414-amino-acid polypeptide reads, in one-letter code: Probable aminotransferase TAT2 (414 aa).

The protein belongs to the class-I pyridoxal-phosphate-dependent aminotransferase family. Requires pyridoxal 5'-phosphate as cofactor.

The sequence is that of Probable aminotransferase TAT2 from Arabidopsis thaliana (Mouse-ear cress).